Reading from the N-terminus, the 61-residue chain is Large ribosomal subunit protein bL32 (61 aa).

Basic residues predominate over residues 1–16; that stretch reads MAVPKRKTSPSKRGMR. Residues 1-40 form a disordered region; it reads MAVPKRKTSPSKRGMRRSADALKAPTYIEDKNSGELRRPH. A compositionally biased stretch (basic and acidic residues) spans 28–40; the sequence is IEDKNSGELRRPH.

This sequence belongs to the bacterial ribosomal protein bL32 family.

This is Large ribosomal subunit protein bL32 from Sinorhizobium medicae (strain WSM419) (Ensifer medicae).